Here is a 311-residue protein sequence, read N- to C-terminus: Methenyltetrahydromethanopterin cyclohydrolase (311 aa).

The protein belongs to the MCH family.

The protein localises to the cytoplasm. It catalyses the reaction 5,10-methenyl-5,6,7,8-tetrahydromethanopterin + H2O = N(5)-formyl-5,6,7,8-tetrahydromethanopterin + H(+). Catalyzes the hydrolysis of methenyl-H(4)MPT(+) to 5-formyl-H(4)MPT. This Halobacterium salinarum (strain ATCC 29341 / DSM 671 / R1) protein is Methenyltetrahydromethanopterin cyclohydrolase.